The following is a 252-amino-acid chain: Phosphate import ATP-binding protein PstB 1 (252 aa).

Residues 6–247 (LQIRDLSVYY…PKRKETEDYI (242 aa)) enclose the ABC transporter domain. 38–45 (GPSGSGKS) is a binding site for ATP.

This sequence belongs to the ABC transporter superfamily. Phosphate importer (TC 3.A.1.7) family. In terms of assembly, the complex is composed of two ATP-binding proteins (PstB), two transmembrane proteins (PstC and PstA) and a solute-binding protein (PstS).

It is found in the cell membrane. It catalyses the reaction phosphate(out) + ATP + H2O = ADP + 2 phosphate(in) + H(+). In terms of biological role, part of the ABC transporter complex PstSACB involved in phosphate import. Responsible for energy coupling to the transport system. In Streptococcus pyogenes serotype M6 (strain ATCC BAA-946 / MGAS10394), this protein is Phosphate import ATP-binding protein PstB 1.